The primary structure comprises 928 residues: DNA ligase 4 (928 aa).

9 residues coordinate ATP: E302, K304, R309, E362, F409, E469, K474, K492, and K494. Catalysis depends on K304, which acts as the N6-AMP-lysine intermediate. Residue E362 coordinates Mg(2+). Residue E469 participates in Mg(2+) binding. BRCT domains lie at 673–769 (VESD…PYFI) and 821–927 (PWIY…DYKF).

The protein belongs to the ATP-dependent DNA ligase family. Requires Mg(2+) as cofactor.

The protein resides in the nucleus. It catalyses the reaction ATP + (deoxyribonucleotide)n-3'-hydroxyl + 5'-phospho-(deoxyribonucleotide)m = (deoxyribonucleotide)n+m + AMP + diphosphate.. Functionally, DNA ligase involved in DNA non-homologous end joining (NHEJ); required for double-strand break (DSB) repair. Not required for the repair of DSBs induced by ionizing radiation or UV light. Has an important role in morphogenesis, positively affecting the capacity to form hyphae. This chain is DNA ligase 4 (LIG4), found in Candida albicans (strain SC5314 / ATCC MYA-2876) (Yeast).